The chain runs to 447 residues: Na(+)-translocating NADH-quinone reductase subunit A (447 aa).

The protein belongs to the NqrA family. In terms of assembly, composed of six subunits; NqrA, NqrB, NqrC, NqrD, NqrE and NqrF.

It carries out the reaction a ubiquinone + n Na(+)(in) + NADH + H(+) = a ubiquinol + n Na(+)(out) + NAD(+). Its function is as follows. NQR complex catalyzes the reduction of ubiquinone-1 to ubiquinol by two successive reactions, coupled with the transport of Na(+) ions from the cytoplasm to the periplasm. NqrA to NqrE are probably involved in the second step, the conversion of ubisemiquinone to ubiquinol. The sequence is that of Na(+)-translocating NADH-quinone reductase subunit A from Tolumonas auensis (strain DSM 9187 / NBRC 110442 / TA 4).